The chain runs to 316 residues: DNA-directed RNA polymerase subunit alpha (316 aa).

The segment at 1 to 229 (MLEMEKPRID…EYLKLFTEID (229 aa)) is alpha N-terminal domain (alpha-NTD). The segment at 246 to 316 (KDKILEMSIE…LNLSFRKSED (71 aa)) is alpha C-terminal domain (alpha-CTD).

The protein belongs to the RNA polymerase alpha chain family. Homodimer. The RNAP catalytic core consists of 2 alpha, 1 beta, 1 beta' and 1 omega subunit. When a sigma factor is associated with the core the holoenzyme is formed, which can initiate transcription.

The enzyme catalyses RNA(n) + a ribonucleoside 5'-triphosphate = RNA(n+1) + diphosphate. DNA-dependent RNA polymerase catalyzes the transcription of DNA into RNA using the four ribonucleoside triphosphates as substrates. In Syntrophomonas wolfei subsp. wolfei (strain DSM 2245B / Goettingen), this protein is DNA-directed RNA polymerase subunit alpha.